Reading from the N-terminus, the 87-residue chain is Small ribosomal subunit protein bS20 (87 aa).

Residues methionine 1–leucine 24 are disordered.

Belongs to the bacterial ribosomal protein bS20 family.

Binds directly to 16S ribosomal RNA. The protein is Small ribosomal subunit protein bS20 of Bordetella avium (strain 197N).